Consider the following 190-residue polypeptide: Small ribosomal subunit protein mS23 (190 aa).

The residue at position 2 (A2) is an N-acetylalanine. N6-succinyllysine is present on K83. K102 carries the N6-acetyllysine modification. A disordered region spans residues 137-190 (KARTQQEGSQVSRKSESMGVESQTALEENPPLKEVPQAQHLESPGEESKGLSPP).

The protein belongs to the mitochondrion-specific ribosomal protein mS23 family. Component of the mitochondrial ribosome small subunit (28S) which comprises a 12S rRNA and about 30 distinct proteins.

It localises to the mitochondrion. The protein is Small ribosomal subunit protein mS23 of Bos taurus (Bovine).